The following is a 582-amino-acid chain: MHILQVITGATLVSVPFVSAIPSSTSEFLPSTAEQNSAVLHSQGRSPPRLWTRLRDSIIETIWRVPSRQHNPSRIPSSLSIPRAPSSIRARYGDDVVLRFTIRSQNDVQALIEASNILFLDIWASTNEWVDIRLAKDVVSSLLGLLPSSLRTAHVPIIHDLAQAVYESYPQPVSSVPNPHHAFSPSVQQSSETQNIFFQDYQPLSVIIPWMRLLASMFSTHVRLVNLGTSYEGREIVGFRIGVRPANADLPTERRKAIVITGGSHAREWIGVSTVNYVAYSLITGYGKSRAITKLVEEFDWVLIPTMNPDGYVYTWETDRLWRKNRQENNLQFCPGVDLDRTWGYEWDGSDSRSNPCSEDFAGDGPFGGRESKVIAQWALNETNHHNVTFVGFLDLHSYSQQILYPYSYSCTNIPPTLENLEELAIGIAKAIRLTDHEHYDVSSACEGSVSSHKKRRGAALRSMQSAGGSALDWFYHDLHVRYAYQLKLRDKGGYGFLLPKKNIVPTGKEVYNAVLVFGQFLLGRGAQDIDWEGDFQFPAHSRPNVPEKEYRGPDEEYEISNQLEDDDNENDTLLGFRTQKV.

Positions 1–20 (MHILQVITGATLVSVPFVSA) are cleaved as a signal peptide. Residues 21–172 (IPSSTSEFLP…QAVYESYPQP (152 aa)) constitute a propeptide that is removed on maturation. The Peptidase M14 domain occupies 200–522 (DYQPLSVIIP…NAVLVFGQFL (323 aa)). Zn(2+) contacts are provided by histidine 265 and glutamate 268. Residues 265–268 (HARE), arginine 323, and 340–341 (DR) contribute to the substrate site. A disulfide bridge connects residues cysteine 334 and cysteine 357. N-linked (GlcNAc...) asparagine glycans are attached at residues asparagine 381 and asparagine 387. Residue histidine 397 participates in Zn(2+) binding. A substrate-binding site is contributed by 398–399 (SY). Over residues 561–571 (SNQLEDDDNEN) the composition is skewed to acidic residues. The tract at residues 561–582 (SNQLEDDDNENDTLLGFRTQKV) is disordered. The N-linked (GlcNAc...) asparagine glycan is linked to asparagine 571.

This sequence belongs to the peptidase M14 family. The cofactor is Zn(2+).

It localises to the vacuole. Its subcellular location is the secreted. Its function is as follows. Inactive carboxypeptidase that may play a role in cell wall organization and biogenesis. This chain is Inactive metallocarboxypeptidase ECM14 (ECM14), found in Coccidioides posadasii (strain RMSCC 757 / Silveira) (Valley fever fungus).